A 278-amino-acid polypeptide reads, in one-letter code: HTH-type transcriptional activator RhaS (278 aa).

The HTH araC/xylS-type domain occupies 174–272 (NLLLAWLEDH…NWSPRDIRQG (99 aa)). DNA-binding regions (H-T-H motif) lie at residues 191–212 (DAVADQFSLSLRTLHRQLKQQT) and 239–262 (VTDIAYRCGFSDSNHFSTLFRREF).

As to quaternary structure, binds DNA as a dimer.

The protein localises to the cytoplasm. Its function is as follows. Activates expression of the rhaBAD and rhaT operons. The polypeptide is HTH-type transcriptional activator RhaS (Shigella boydii serotype 4 (strain Sb227)).